The following is a 446-amino-acid chain: Chromosomal replication initiator protein DnaA (446 aa).

The tract at residues 1–72 (MENILDLWNK…ADTIYELTGE (72 aa)) is domain I, interacts with DnaA modulators. Residues 72–109 (EELSIKFIIPQNQDEVEAMPKSPIKKMSKEDPVDIPQN) are domain II. Residues 110-326 (MLNPKYTFDT…GALIRVVAYS (217 aa)) are domain III, AAA+ region. ATP contacts are provided by G154, G156, K157, and T158. The interval 327–446 (SLINKDINAD…HVKEIKEQLK (120 aa)) is domain IV, binds dsDNA.

It belongs to the DnaA family. In terms of assembly, oligomerizes as a right-handed, spiral filament on DNA at oriC.

The protein resides in the cytoplasm. Functionally, plays an essential role in the initiation and regulation of chromosomal replication. ATP-DnaA binds to the origin of replication (oriC) to initiate formation of the DNA replication initiation complex once per cell cycle. Binds the DnaA box (a 9 base pair repeat at the origin) and separates the double-stranded (ds)DNA. Forms a right-handed helical filament on oriC DNA; dsDNA binds to the exterior of the filament while single-stranded (ss)DNA is stabiized in the filament's interior. The ATP-DnaA-oriC complex binds and stabilizes one strand of the AT-rich DNA unwinding element (DUE), permitting loading of DNA polymerase. After initiation quickly degrades to an ADP-DnaA complex that is not apt for DNA replication. Binds acidic phospholipids. This is Chromosomal replication initiator protein DnaA from Bacillus pumilus (strain SAFR-032).